Here is a 398-residue protein sequence, read N- to C-terminus: Acetate kinase (398 aa).

N10 lines the Mg(2+) pocket. K17 contributes to the ATP binding site. Position 91 (R91) interacts with substrate. The Proton donor/acceptor role is filled by D148. ATP-binding positions include 208-212 (HLGNG), 283-285 (DCR), and 331-335 (GIGEN). Mg(2+) is bound at residue E385.

It belongs to the acetokinase family. As to quaternary structure, homodimer. Mg(2+) is required as a cofactor. Requires Mn(2+) as cofactor.

It localises to the cytoplasm. It catalyses the reaction acetate + ATP = acetyl phosphate + ADP. Its pathway is metabolic intermediate biosynthesis; acetyl-CoA biosynthesis; acetyl-CoA from acetate: step 1/2. In terms of biological role, catalyzes the formation of acetyl phosphate from acetate and ATP. Can also catalyze the reverse reaction. This is Acetate kinase from Shewanella loihica (strain ATCC BAA-1088 / PV-4).